Reading from the N-terminus, the 1486-residue chain is Chromosome partition protein MukB (1486 aa).

34-41 (GGNGAGKS) is a binding site for ATP. Coiled-coil stretches lie at residues 326–418 (LEAD…QYNQ), 444–480 (LETF…QAYQ), and 509–603 (RHLA…RAPV). The segment at 666-783 (PGGSEDQRLN…EVPLFGRAAR (118 aa)) is flexible hinge. Coiled-coil stretches lie at residues 835 to 923 (EAEI…AKLE), 977 to 1115 (EMLS…TAKA), and 1209 to 1266 (VEAI…QNVS).

Belongs to the SMC family. MukB subfamily. In terms of assembly, homodimerization via its hinge domain. Binds to DNA via its C-terminal region. Interacts, and probably forms a ternary complex, with MukE and MukF via its C-terminal region. The complex formation is stimulated by calcium or magnesium. Interacts with tubulin-related protein FtsZ.

It is found in the cytoplasm. Its subcellular location is the nucleoid. In terms of biological role, plays a central role in chromosome condensation, segregation and cell cycle progression. Functions as a homodimer, which is essential for chromosome partition. Involved in negative DNA supercoiling in vivo, and by this means organize and compact chromosomes. May achieve or facilitate chromosome segregation by condensation DNA from both sides of a centrally located replisome during cell division. This chain is Chromosome partition protein MukB, found in Escherichia coli (strain K12 / MC4100 / BW2952).